A 620-amino-acid polypeptide reads, in one-letter code: Coenzyme F420-dependent sulfite reductase (620 aa).

Positions 6–35 constitute a 4Fe-4S ferredoxin-type 1 domain; that stretch reads LNEIVDSGVCARCGTCTIVCPNGILTFDER. Residues Cys15, Cys18, Cys21, Cys25, Cys428, Cys434, Cys468, Cys472, Cys495, Cys498, Cys501, Cys505, Cys524, Cys527, Cys530, and Cys534 each coordinate [4Fe-4S] cluster. Cys472 lines the siroheme pocket. 4Fe-4S ferredoxin-type domains lie at 486–515 and 520–544; these read KYPK…IRGE and NYNV…VKEE.

The protein belongs to the nitrite and sulfite reductase 4Fe-4S domain family. [4Fe-4S] cluster is required as a cofactor. The cofactor is siroheme.

The catalysed reaction is 3 oxidized coenzyme F420-(gamma-L-Glu)(n) + hydrogen sulfide + 3 H2O + 2 H(+) = 3 reduced coenzyme F420-(gamma-L-Glu)(n) + sulfite. In terms of biological role, catalyzes the reduction of sulfite to sulfide using reduced F420 as the electron source. Involved in sulfite detoxification and assimilation. Cannot use NADH or NADPH. In Methanocaldococcus jannaschii (strain ATCC 43067 / DSM 2661 / JAL-1 / JCM 10045 / NBRC 100440) (Methanococcus jannaschii), this protein is Coenzyme F420-dependent sulfite reductase.